Here is a 102-residue protein sequence, read N- to C-terminus: uncharacterized protein (102 aa).

The disordered stretch occupies residues 1–71 (MKRMIRSHGR…GSANETSACT (71 aa)). Topologically, residues 1–79 (MKRMIRSHGR…CTRTDHQKAD (79 aa)) are extracellular. Residues 56–71 (SSGTRRGSANETSACT) are compositionally biased toward polar residues. Residue Asn65 is glycosylated (N-linked (GlcNAc...) asparagine; by host). Residues 80–97 (IGLWFMFLVFGLCSWLAM) form a helical membrane-spanning segment. Residues 98 to 102 (RYRAQ) lie on the Cytoplasmic side of the membrane.

This sequence belongs to the HHV-5 UL15A protein family.

It localises to the host membrane. This is an uncharacterized protein from Human cytomegalovirus (strain AD169) (HHV-5).